The sequence spans 876 residues: MSKSTAEIRQAFLDFFHSKGHQVVSSSSLVPNNDPTLLFTNAGMNQFKDVFLGLDKRNYSRATTSQRCVRAGGKHNDLENVGYTARHHTFFEMLGNFSFGDYFKHDAIQFAWELLTGENWFALPKERLWVTVYETDDEAYEIWEKEVGIPRERIIRIGDNKGAPYASDNFWQMGDTGPCGPCTEIFYDHGDHIWGGPPGSPEEDGDRYIEIWNIVFMQFNRQADGAMEPLPKPSVDTGMGLERIAAVLQHVNSNYDIDLFRTLIEAVAKVTGATDLGNKSLRVIADHIRSCAFLVADGVLPSNENRGYVLRRIIRRAVRHGNMLGAKETFFYKLVGPLIEVMGSAGEELKRQQAQVEQVLKTEEEQFARTLERGLALLDEELAKLQGDTLDGETAFRLYDTYGFPVDLTADVCRERNIKVDEAGFEAAMEEQRRRAREASGFGADYNAMIRVDSASEFKGYDHLELNGKVTALFVDGKAVEVINAGQEAVVVLDQTPFYAESGGQVGDKGELKGAGFTFAVDDTQKYGQAIGHLGKLSAGALKVGDAVQADVDEARRARIRLNHSATHLMHAALRQVLGTHVAQKGSLVSDKVLRFDFSHNEAMKPSEIREVEDLVNAQIRRNLPIETNIMDLDAAKAKGAMALFGEKYDERVRVLSMGDFSTELCGGTHASRTGDIGLFRIISESGTAAGIRRIEAVTGEGAMATVHAQSDRLNDIAHLLKGDSQNLGDKVRAVLERTRQLEKELQQLKDQAAAQESANLSSKAVDLNGVKLLVSELAGIEPKMLRTMVDDLKNQLGSTVIVLATVVEGKVSLIAGVSKDVTDRVKAGELIGMVAQQVGGKGGGRPDMAQAGGTDAAALPAALASVQGWVSAKLQ.

Residues His564, His568, Cys666, and His670 each coordinate Zn(2+).

This sequence belongs to the class-II aminoacyl-tRNA synthetase family. In terms of assembly, homotetramer. Requires Zn(2+) as cofactor.

It localises to the cytoplasm. The enzyme catalyses tRNA(Ala) + L-alanine + ATP = L-alanyl-tRNA(Ala) + AMP + diphosphate. Its function is as follows. Catalyzes the attachment of alanine to tRNA(Ala) in a two-step reaction: alanine is first activated by ATP to form Ala-AMP and then transferred to the acceptor end of tRNA(Ala). Also edits incorrectly charged Ser-tRNA(Ala) and Gly-tRNA(Ala) via its editing domain. This Salmonella choleraesuis (strain SC-B67) protein is Alanine--tRNA ligase.